We begin with the raw amino-acid sequence, 333 residues long: Photosystem II assembly protein Ycf48 (333 aa).

Positions Met1–Arg25 are cleaved as a signal peptide.

Belongs to the Ycf48 family. In terms of assembly, part of early PSII assembly complexes which includes D1 (psbA) and PsbI; not found in mature PSII. Binds to the lumenal side of PSII complexes. Interacts with YidC.

The protein resides in the cellular thylakoid lumen. A factor required for optimal assembly of photosystem II (PSII), acting in the early stages of PSII assembly. Also plays a role in replacement of photodamaged D1 (psbA). Assists YidC in synthesis of chlorophyll-binding proteins. The sequence is that of Photosystem II assembly protein Ycf48 from Synechococcus sp. (strain JA-2-3B'a(2-13)) (Cyanobacteria bacterium Yellowstone B-Prime).